The following is a 317-amino-acid chain: Hps1-dma1 cluster cytochrome P450 monooxygenase cyp3.1 (317 aa).

Positions 183–205 are disordered; the sequence is PAIETDRKTSSHSRSPTALADKQ. C260 provides a ligand contact to heme.

The protein belongs to the cytochrome P450 family. The cofactor is heme.

The protein operates within secondary metabolite biosynthesis. Its function is as follows. Cytochrome P450 monooxygenase; part of the hps1-dma1 gene cluster that probably mediates the biosynthesis a derivative of cyclopiazonic acid (CPA). The hybrid polyketide synthase-nonribosomal peptide synthetase (PKS-NRPS) nps1 might incorporates acetyl-CoA, malonyl-CoA, and tryptophan (Trp) and utilizes a C-terminal redox-incompetent reductase domain to make and release the tryptophan tetramic acid, cyclo-acetoacetyl-L-tryptophan (c-AATrp), as the first intermediate in the pathway. In addition, the cluster also includes the tryptophan dimethylallyltransferase dma1, the FAD-dependent oxidoreductase toxD, the cytochrome P450 monooxygenase cyp3.1 and the methyltransferase DOTSEDRAFT_139328; the latter 2 being not present in all CPA-producing fungi but involved in additional modifications that occur in biosynthesis the of a range of CPA and CPA-like products. Further studies are required to clarify whether the CPA-like hps1-dma1 cluster is functional or a non-functional relic reflecting evolution of D.septosporum. This chain is Hps1-dma1 cluster cytochrome P450 monooxygenase cyp3.1 (cyp3.1), found in Dothistroma septosporum (strain NZE10 / CBS 128990) (Red band needle blight fungus).